A 181-amino-acid chain; its full sequence is Large ribosomal subunit protein uL5 (181 aa).

It belongs to the universal ribosomal protein uL5 family. As to quaternary structure, part of the 50S ribosomal subunit; part of the 5S rRNA/L5/L18/L25 subcomplex. Contacts the 5S rRNA and the P site tRNA. Forms a bridge to the 30S subunit in the 70S ribosome.

This is one of the proteins that bind and probably mediate the attachment of the 5S RNA into the large ribosomal subunit, where it forms part of the central protuberance. In the 70S ribosome it contacts protein S13 of the 30S subunit (bridge B1b), connecting the 2 subunits; this bridge is implicated in subunit movement. Contacts the P site tRNA; the 5S rRNA and some of its associated proteins might help stabilize positioning of ribosome-bound tRNAs. The chain is Large ribosomal subunit protein uL5 from Aster yellows witches'-broom phytoplasma (strain AYWB).